The sequence spans 266 residues: Phosphatidylglycerol--prolipoprotein diacylglyceryl transferase (266 aa).

Helical transmembrane passes span 21-41 (LAIR…MWLA), 60-80 (LLFA…VLFY), 95-115 (VWTG…AMLW), 124-144 (FFSV…MGRM), 176-196 (SQLY…NIFI), 203-223 (GAVS…IEYF), and 236-256 (WISM…LLML). Residue Arg-143 coordinates a 1,2-diacyl-sn-glycero-3-phospho-(1'-sn-glycerol).

It belongs to the Lgt family.

Its subcellular location is the cell inner membrane. It carries out the reaction L-cysteinyl-[prolipoprotein] + a 1,2-diacyl-sn-glycero-3-phospho-(1'-sn-glycerol) = an S-1,2-diacyl-sn-glyceryl-L-cysteinyl-[prolipoprotein] + sn-glycerol 1-phosphate + H(+). It participates in protein modification; lipoprotein biosynthesis (diacylglyceryl transfer). Catalyzes the transfer of the diacylglyceryl group from phosphatidylglycerol to the sulfhydryl group of the N-terminal cysteine of a prolipoprotein, the first step in the formation of mature lipoproteins. The protein is Phosphatidylglycerol--prolipoprotein diacylglyceryl transferase of Photobacterium profundum (strain SS9).